The following is a 105-amino-acid chain: Membrane-stabilizing protein A (105 aa).

A helical transmembrane segment spans residues 1–21 (MQFYLILLAILYLIVSFISIF). The Cytoplasmic portion of the chain corresponds to 22–29 (KMEVVFTR). The chain crosses the membrane as a helical span at residues 30 to 50 (ILRIIMGVLLLFVLALTTMSF). The Extracellular portion of the chain corresponds to 51–55 (PKENW). Residues 56-76 (WVFIVLLLLVGNVEVTGFKML) form a helical membrane-spanning segment. The Cytoplasmic portion of the chain corresponds to 77–84 (KKDLKGVN). Residues 85-105 (ILNLMSLFIFVIYFILTIVLF) form a helical membrane-spanning segment.

Belongs to the MspA family.

It is found in the membrane. Plays a role in toxin production, resistance to host innate immune mechanisms, and iron homeostasis. The chain is Membrane-stabilizing protein A from Staphylococcus aureus (strain NCTC 8325 / PS 47).